We begin with the raw amino-acid sequence, 329 residues long: MKFSKVSLLAASASVALSAPVAVTVTQHVHQAATVVVQGIVRVENGQTLTTFITKGTQTASASPVATTSAPIVVANAQVDSIATSVIQESAVVAESATFEESSTETSEAFSTATATIQAVQTSASATQDDVTTTLTSSTQPTSTTTPTTTTTSPTTTTSPTTTASPTTTASPTTATTTQSTASSTQSSSSDFSTSMVNEHNTKRALHKDTGSLTWSDTLATYAQNYADSYDCSGNLVHSGGPYGENLALGYGTTGSVDAWYNEITSYDYSNPGFSESAGHFTQVVWKGTSEVGCGLKSCGGEWGDYIICSYKAAGNVIGEFADNVMPLA.

A signal peptide spans 1–18 (MKFSKVSLLAASASVALS). Polar residues predominate over residues 122–131 (TSASATQDDV). Residues 122 to 197 (TSASATQDDV…SSSDFSTSMV (76 aa)) are disordered. Residues 132–190 (TTTLTSSTQPTSTTTPTTTTTSPTTTTSPTTTASPTTTASPTTATTTQSTASSTQSSSS) show a composition bias toward low complexity. The 115-residue stretch at 197 to 311 (VNEHNTKRAL…EWGDYIICSY (115 aa)) folds into the SCP domain.

Belongs to the CRISP family. In terms of processing, O-glycosylated.

Its subcellular location is the secreted. Secreted protein required for efficient export of lipids such as acetylated sterols. Acts in detoxification of hydrophobic compounds. This Saccharomyces cerevisiae (strain ATCC 204508 / S288c) (Baker's yeast) protein is Protein PRY2 (PRY2).